Consider the following 255-residue polypeptide: Pyridoxine 5'-phosphate synthase (255 aa).

Position 6 (N6) interacts with 3-amino-2-oxopropyl phosphate. Position 8-9 (8-9) interacts with 1-deoxy-D-xylulose 5-phosphate; it reads DH. A 3-amino-2-oxopropyl phosphate-binding site is contributed by R17. H41 (proton acceptor) is an active-site residue. 1-deoxy-D-xylulose 5-phosphate contacts are provided by R43 and H48. E68 acts as the Proton acceptor in catalysis. T96 is a binding site for 1-deoxy-D-xylulose 5-phosphate. H208 (proton donor) is an active-site residue. Residues G209 and 230 to 231 contribute to the 3-amino-2-oxopropyl phosphate site; that span reads GQ.

This sequence belongs to the PNP synthase family. In terms of assembly, homooctamer; tetramer of dimers.

The protein localises to the cytoplasm. It carries out the reaction 3-amino-2-oxopropyl phosphate + 1-deoxy-D-xylulose 5-phosphate = pyridoxine 5'-phosphate + phosphate + 2 H2O + H(+). The protein operates within cofactor biosynthesis; pyridoxine 5'-phosphate biosynthesis; pyridoxine 5'-phosphate from D-erythrose 4-phosphate: step 5/5. In terms of biological role, catalyzes the complicated ring closure reaction between the two acyclic compounds 1-deoxy-D-xylulose-5-phosphate (DXP) and 3-amino-2-oxopropyl phosphate (1-amino-acetone-3-phosphate or AAP) to form pyridoxine 5'-phosphate (PNP) and inorganic phosphate. In Campylobacter lari (strain RM2100 / D67 / ATCC BAA-1060), this protein is Pyridoxine 5'-phosphate synthase.